A 520-amino-acid chain; its full sequence is Calcium and calcium/calmodulin-dependent serine/threonine-protein kinase (520 aa).

Residues 13–302 enclose the Protein kinase domain; it reads YEVVDVLGKG…ANDLLKHPWV (290 aa). Residues 19–27 and Lys44 each bind ATP; that span reads LGKGGFSVV. Catalysis depends on Asp167, which acts as the Proton acceptor. A helical membrane pass occupies residues 227 to 243; sequence MWSLGVILYILLSGCPP. At Thr267 the chain carries Phosphothreonine; by autocatalysis. A calmodulin-binding region spans residues 325 to 338; sequence ARRKLRAAAIASVL. A coiled-coil region spans residues 346-368; the sequence is TKKLKNLLGSHDMKSEELENLRA. 4 consecutive EF-hand domains span residues 361-395, 396-431, 432-467, and 474-509; these read EELE…MKMN, SLIP…LRNS, QGDD…LPED, and TEPG…DSSL. 14 residues coordinate Ca(2+): Asp409, Asn411, Asp413, Thr415, Glu420, Asp445, Asp447, Ser449, Cys451, Glu456, Asp487, Asn489, Asp491, and Glu498.

The protein belongs to the protein kinase superfamily. CAMK Ser/Thr protein kinase family. CaMK subfamily. Post-translationally, autophosphorylation stimulated by calcium and inhibited by calcium/calmodulin. Occurs probably by an intermolecular mechanism.

It is found in the membrane. The catalysed reaction is L-seryl-[protein] + ATP = O-phospho-L-seryl-[protein] + ADP + H(+). The enzyme catalyses L-threonyl-[protein] + ATP = O-phospho-L-threonyl-[protein] + ADP + H(+). Its activity is regulated as follows. Activated by calcium/calmodulin binding after calcium-induced autophosphorylation. Autophosphorylation is associated with a time-dependent loss of kinase activity sensitive to reaction pH and ATP concentration. In vitro inactivation leads to the formation of network-like structures. In terms of biological role, protein kinase that may be involved in microsporogenesis. In Lilium longiflorum (Trumpet lily), this protein is Calcium and calcium/calmodulin-dependent serine/threonine-protein kinase (CCAMK).